The sequence spans 571 residues: Septation ring formation regulator EzrA (571 aa).

Topologically, residues 1–3 (MYY) are extracellular. The helical transmembrane segment at 4–22 (MLIGFIIVVIAVIGAGYIL) threads the bilayer. Topologically, residues 23–571 (KRKHYQRINE…ASKVSVDDIE (549 aa)) are cytoplasmic. Coiled coils occupy residues 102–147 (ATNA…TKEK), 248–298 (LAQM…DTLE), 326–374 (DALA…ASGE), 400–437 (KFAEELRSLRKDELEARDDAERMRRAIITLDRKMERER), and 478–529 (RIAE…ENHF).

It belongs to the EzrA family.

It localises to the cell membrane. Functionally, negative regulator of FtsZ ring formation; modulates the frequency and position of FtsZ ring formation. Inhibits FtsZ ring formation at polar sites. Interacts either with FtsZ or with one of its binding partners to promote depolymerization. The polypeptide is Septation ring formation regulator EzrA (Listeria monocytogenes serotype 4a (strain HCC23)).